Here is a 137-residue protein sequence, read N- to C-terminus: Putative pre-16S rRNA nuclease (137 aa).

Belongs to the YqgF nuclease family.

It localises to the cytoplasm. Functionally, could be a nuclease involved in processing of the 5'-end of pre-16S rRNA. The chain is Putative pre-16S rRNA nuclease from Chromobacterium violaceum (strain ATCC 12472 / DSM 30191 / JCM 1249 / CCUG 213 / NBRC 12614 / NCIMB 9131 / NCTC 9757 / MK).